A 2002-amino-acid chain; its full sequence is [F-actin]-monooxygenase MICAL3 (2002 aa).

The segment at 2–494 is monooxygenase domain; sequence EERKHETMNP…RHLYDTGETK (493 aa). FAD-binding positions include C97, 116 to 118, 123 to 125, F183, Y298, and D398; these read EKR and RNN. The 107-residue stretch at 518–624 folds into the Calponin-homology (CH) domain; sequence VARSSKLLGW…YLTQFYEMFK (107 aa). S649 bears the Phosphoserine mark. Residues 658-706 are disordered; the sequence is GQTISRKRSPKDKKEKDLDGAGKRRKTSQSEEEEAPRGHRGERPTLVST. The short motif at 663 to 684 is the Nuclear localization signal element; that stretch reads RKRSPKDKKEKDLDGAGKRRKT. Positions 669 to 679 are enriched in basic and acidic residues; sequence DKKEKDLDGAG. 2 positions are modified to phosphoserine: S685 and S687. One can recognise an LIM zinc-binding domain in the interval 762–824; sequence DTCYFCQKRV…KPHYCYRLSG (63 aa). Zn(2+)-binding residues include C764, C767, H785, C788, C791, C794, C814, and H817. A disordered region spans residues 835-883; sequence PLSGKEAKGPLQDGATTDANGRANAVASSTERTPGSGVNGLEEPSIAKR. T887 bears the Phosphothreonine mark. 3 disordered regions span residues 907–1313, 1335–1776, and 1791–1821; these read QEVP…SPLA, RRSL…GKHR, and LSFS…TYTE. Acidic residues predominate over residues 938–950; it reads SEMEEEGEEEEEE. Residue S977 is modified to Phosphoserine. Residues 991–1017 show a composition bias toward acidic residues; it reads NEEEEEEEEEYEEEEEEDYDEEEEESS. Basic and acidic residues predominate over residues 1041–1054; sequence HWTHIREREEEERM. Positions 1055–1066 are enriched in low complexity; it reads APASESSASGAP. Residues 1068-1102 show a composition bias toward acidic residues; it reads DENDLEEDVDSEPAEIEGEAAEDGDPGDTGAELDD. Residues S1134, S1143, S1160, and S1192 each carry the phosphoserine modification. The span at 1150 to 1163 shows a compositional bias: polar residues; it reads GPSQATSPIRSPQE. The segment covering 1191–1218 has biased composition (basic and acidic residues); the sequence is KSPEERLFPEPLLPKEKPKADAPSDLKA. Positions 1239–1258 are enriched in pro residues; that stretch reads PGSPQPQPPVAASTPPPSPL. Polar residues-rich tracts occupy residues 1268 to 1280 and 1288 to 1302; these read TEAT…QSPI and KTST…QSQS. At S1274 the chain carries Phosphoserine. Position 1276 is a phosphothreonine (T1276). S1278 is subject to Phosphoserine. A phosphoserine mark is found at S1310 and S1337. The residue at position 1341 (T1341) is a Phosphothreonine. Phosphoserine is present on residues S1371 and S1384. A compositionally biased stretch (basic and acidic residues) spans 1407–1422; it reads PSDRELRSAQEERREL. Residues 1423–1435 show a composition bias toward low complexity; that stretch reads SSSSGLGLHGSSS. Phosphoserine is present on S1433. Positions 1436–1451 are enriched in polar residues; it reads NMKTLGSQSFNTSDSA. T1454 carries the phosphothreonine modification. Residues 1456–1467 show a composition bias toward pro residues; that stretch reads PSSPPPPPPPGE. The segment covering 1516-1530 has biased composition (acidic residues); sequence SVEEIPFADDVEDTY. Residues 1588-1604 show a composition bias toward basic and acidic residues; the sequence is EAKELAEERMRAREKSV. Position 1649 is a phosphoserine (S1649). At T1651 the chain carries Phosphothreonine. The span at 1657–1668 shows a compositional bias: basic and acidic residues; the sequence is GSEEPTLKHEAT. The span at 1674 to 1694 shows a compositional bias: low complexity; it reads SPPSDSGGPDGSFTSSEGSSG. Residues 1695-1713 are compositionally biased toward basic residues; sequence KSKKRSSLFSPRRNKKEKK. Phosphoserine occurs at positions 1701 and 1704. The span at 1760 to 1769 shows a compositional bias: polar residues; it reads CPSTPSSGAT. The span at 1804 to 1820 shows a compositional bias: basic and acidic residues; that stretch reads VLEKSSQKSRREPRTYT. Residues 1821–1992 adopt a coiled-coil conformation; sequence EEELNAKLTR…EEDKDLEAAM (172 aa). The bMERB domain maps to 1841–1990; sequence KQEELKRLHR…EREEDKDLEA (150 aa). The residue at position 1912 (S1912) is a Phosphoserine.

Belongs to the Mical family. As to quaternary structure, interacts with RAB1B, RAB8A, RAB10, RAB13 and RAB15 (in their GTP-bound forms); binding to RAB1B is of low affinity compared to other Rab proteins; at least in case of RAB8A can bind 2 molecules of RAB8A simultaneously through a high and a low affinity binding site, respectively. Interacts with ERC1 and RAB8A; may bridge ERC1 with RAB8A. Interacts with KIF23 and ERC1; enhances the interaction between KIF23 and ERC1. Interacts with NINL isoform 2. It depends on FAD as a cofactor. Ubiquitous.

The protein localises to the cytoplasm. It localises to the cell cortex. The protein resides in the cytoskeleton. It is found in the nucleus. Its subcellular location is the midbody. The protein localises to the spindle. It localises to the cilium basal body. The enzyme catalyses L-methionyl-[F-actin] + NADPH + O2 + H(+) = L-methionyl-(R)-S-oxide-[F-actin] + NADP(+) + H2O. Monooxygenase that promotes depolymerization of F-actin by mediating oxidation of specific methionine residues on actin to form methionine-sulfoxide, resulting in actin filament disassembly and preventing repolymerization. In the absence of actin, it also functions as a NADPH oxidase producing H(2)O(2). Seems to act as Rab effector protein and plays a role in vesicle trafficking. Involved in exocytic vesicles tethering and fusion: the monooxygenase activity is required for this process and implicates RAB8A associated with exocytotic vesicles. Required for cytokinesis. Contributes to stabilization and/or maturation of the intercellular bridge independently of its monooxygenase activity. Promotes recruitment of Rab8 and ERC1 to the intercellular bridge, and together these proteins are proposed to function in timely abscission. The chain is [F-actin]-monooxygenase MICAL3 (MICAL3) from Homo sapiens (Human).